A 925-amino-acid chain; its full sequence is MDRREFIKSSAAAAACSAAGIAVPSSLSAAENQDGWRWDKSACRFCGTGCGIMVATKNGKIVAVKGDPLAPVNRGLNCIKGYFNAKIMYGEDRITKPLLRVNANGEFDKKGKFQEVSWKRAFDEMEKQFRKTYAELGPTGIGVFGSGQYTIQEGYAISKLIKGGFRSHNIDPNARHCMASAVVGFMQTFGIDEPAGCYDDIELTDTIVTWGANMAEMHPILWSRVSDRKLQNSDKVKVVNLSTYSTRTSNIADIEIIFTPHTDLAIWNYIAREIVYNHPEAIDEEFVKANCVFTTGPVDIGYGMRANIKHPKYLPSELDTAAKEKSTVLSENEGVTLAYLGMKAGDTLENKSTGAPDKHWIIQYEDFKKALAPYTLDFVAKLAKGDPNEDLEEFKKKLKALADLYIEKNRKVVSFWTMGMNQHTRGVWVNEQSYMVHFLLGKQAKPGSGAFSLTGQPSACGTAREVGTFSHRLPADMVVANPKHREITEKIWKIPAGTINPKPGAPYMKIMRDLEDGKVKFVWVHVNNPWQNSANANHWIKAAREMDNFIVVSDPYPGISAKVGDLILPTAMIYEKWGAYGNAERRTQHWRQQVLPVGDAMSDTWQYMEFAKRFKLKDFWGEVKVDGKLTLPNVLDKAVAMGYNPENTLFEVLFANKSAMKFSSDDKIMAGYDNTEVFGDSRNVVGSDGNVFKGYGFFVQKYLWEEYREFGLGHGHDLADFDTYHKVRGLRWPVVDGKETLWRFNTKYDVYAKKDNPNGDFSFYGNKNGALVTGDLAKATSKEKEALKSRAKIFFRPYMDPPEMPSKDYPLWLCTGRVLEHWHSGTMTMRVPELYRAVPEALCFMNEIDGNKFGIKQNDIIWVESRRGKVKARVDFRGRNKPAEGLIYVPWFDENVFINKVCLDATDPLSKQTDFKKCAVKIYKA.

Residues 1 to 30 constitute a signal peptide (tat-type signal); that stretch reads MDRREFIKSSAAAAACSAAGIAVPSSLSAA. The region spanning 36 to 92 is the 4Fe-4S Mo/W bis-MGD-type domain; sequence WRWDKSACRFCGTGCGIMVATKNGKIVAVKGDPLAPVNRGLNCIKGYFNAKIMYGED. [4Fe-4S] cluster-binding residues include C43, C46, C50, and C78. Mo-bis(molybdopterin guanine dinucleotide) is bound by residues K80, Q148, N173, C177, 210–217, M418, Q422, N528, 553–554, K576, D603, and 815–824; these read WGANMAEM, SD, and TGRVLEHWHS. Residue W891 coordinates substrate. Mo-bis(molybdopterin guanine dinucleotide)-binding residues include N899 and K916.

The protein belongs to the prokaryotic molybdopterin-containing oxidoreductase family. NasA/NapA/NarB subfamily. As to quaternary structure, component of the periplasmic nitrate reductase NapAB complex composed of NapA and NapB. [4Fe-4S] cluster serves as cofactor. The cofactor is Mo-bis(molybdopterin guanine dinucleotide). In terms of processing, predicted to be exported by the Tat system. The position of the signal peptide cleavage has not been experimentally proven.

The protein localises to the periplasm. It carries out the reaction 2 Fe(II)-[cytochrome] + nitrate + 2 H(+) = 2 Fe(III)-[cytochrome] + nitrite + H2O. In terms of biological role, catalytic subunit of the periplasmic nitrate reductase complex NapAB. Receives electrons from NapB and catalyzes the reduction of nitrate to nitrite. In Campylobacter fetus subsp. fetus (strain 82-40), this protein is Periplasmic nitrate reductase.